We begin with the raw amino-acid sequence, 421 residues long: MSHSWDGLGEIASVAQLTGLDAVKLIGLIVKAANTAWMHKKNCRQFAQHLKLIGNLLEQLKISEMKKYPETREPLEGLEDALRRSYLLVNSCRDRSYLYLLAMGWNIVYQFRKHQDEIDRFLKIIPLITLVDNARIRERFEYIDRDQREYTLDEEDRHVQDVILKQESTREAASVLKKTLSCSYPNLRFCEALKTENEKLQIELQRSQEHYDVAQCEVIQRLIGVTQAAAAVEPDSEKELTKKASKKSERSSSMKTEYSYDEDSPKKSSTRAASRSTSNVSSGHDLLSRRASQAQHHEEWHTDLLACCSEPSLCFKTFFFPCGTLAKIATAASNRHISSAEACNELMAYSLILSCCCYTCCVRRKLRKTLNITGGFIDDFLSHVMCCCCALVQELREVEIRGAYGTEKTKISPPSSQFMEH.

Residues 188–218 (RFCEALKTENEKLQIELQRSQEHYDVAQCEV) adopt a coiled-coil conformation. Residues 233 to 288 (EPDSEKELTKKASKKSERSSSMKTEYSYDEDSPKKSSTRAASRSTSNVSSGHDLLS) form a disordered region. Over residues 235–252 (DSEKELTKKASKKSERSS) the composition is skewed to basic and acidic residues. Residues 270–282 (TRAASRSTSNVSS) are compositionally biased toward low complexity. The chain crosses the membrane as a helical span at residues 346–362 (LMAYSLILSCCCYTCCV).

In terms of tissue distribution, expressed in roots, leaves, stems, flowers and siliques. Expressed in vascular tissues of cotyledons, leaves and primary root, in the promeristem and adjacent elongation zone of the primary root and in the shoot apical meristem. Detected in the stele and endodermis, but not in the cortex, epidermis or root cap, including the columella. Not expressed in root hairs or in mesophyll cells of leaves and cotyledons.

It localises to the cell membrane. With respect to regulation, inhibited by GdCl(3), but not by verapamil. Calcium-permeable stretch-activated channel component. Involved in mechano-stimulated calcium uptake mechanism and in mechanosensing in the primary root. The polypeptide is Protein MID1-COMPLEMENTING ACTIVITY 1 (MCA1) (Arabidopsis thaliana (Mouse-ear cress)).